A 324-amino-acid polypeptide reads, in one-letter code: tRNA U34 carboxymethyltransferase (324 aa).

Carboxy-S-adenosyl-L-methionine is bound by residues Lys92, Trp106, Lys111, Gly131, 153–155 (DPT), 182–183 (IE), Met197, Tyr201, and Arg316.

Belongs to the class I-like SAM-binding methyltransferase superfamily. CmoB family. In terms of assembly, homotetramer.

The catalysed reaction is carboxy-S-adenosyl-L-methionine + 5-hydroxyuridine(34) in tRNA = 5-carboxymethoxyuridine(34) in tRNA + S-adenosyl-L-homocysteine + H(+). Its function is as follows. Catalyzes carboxymethyl transfer from carboxy-S-adenosyl-L-methionine (Cx-SAM) to 5-hydroxyuridine (ho5U) to form 5-carboxymethoxyuridine (cmo5U) at position 34 in tRNAs. The polypeptide is tRNA U34 carboxymethyltransferase (Proteus mirabilis (strain HI4320)).